We begin with the raw amino-acid sequence, 332 residues long: Zinc finger protein CONSTANS-LIKE 13 (332 aa).

Zn(2+)-binding residues include cysteine 13, cysteine 16, cysteine 36, histidine 41, cysteine 56, cysteine 59, cysteine 79, and histidine 84. A B box-type 1; atypical zinc finger spans residues 13–55 (CDYCDSSVALVYCKADSAKLCLACDKQVHVANQLFAKHFRSLL). The segment at 56 to 96 (CDSCNESPSSLFCETERSVLCQNCDWQHHTASSSLHSRRPF) adopts a B box-type 2; atypical zinc-finger fold. The 43-residue stretch at 287–329 (RNSALSRYKEKKKSRRYEKHIRYESRKVRAESRTRIRGRFAKA) folds into the CCT domain.

It belongs to the CONSTANS family.

The protein localises to the nucleus. The protein is Zinc finger protein CONSTANS-LIKE 13 (COL13) of Arabidopsis thaliana (Mouse-ear cress).